Reading from the N-terminus, the 1194-residue chain is Protein argonaute 3 (1194 aa).

Basic and acidic residues predominate over residues 1-98; sequence MDRGGYRGGR…GRGGGGDRGR (98 aa). Disordered stretches follow at residues 1–277 and 299–341; these read MDRG…VSQS and TVLP…DKGG. The segment covering 142-158 has biased composition (low complexity); it reads PPSSSQAQVSQGVAPGD. Residues 167 to 180 show a composition bias toward basic and acidic residues; that stretch reads VGRDGVGDVGRDGV. Residues 181–214 show a composition bias toward gly residues; it reads GDVGQGGVGDVGQVGVGDVGQGGVGDVGQGGVGD. The segment covering 215 to 228 has biased composition (basic and acidic residues); the sequence is VGRDGVGDVGRDGV. A compositionally biased stretch (gly residues) spans 229 to 238; the sequence is GDVGRGGVGD. Composition is skewed to low complexity over residues 256–277 and 299–316; these read QLQQPQPQAVSQSSSQGQVSQS and TVLPSSSSSNVVASHTAS. Over residues 317 to 326 the composition is skewed to polar residues; the sequence is GSQVMTPKPS. Positions 327-341 are enriched in basic and acidic residues; it reads SSDKKEPVKRPDKGG. In terms of domain architecture, PAZ spans 540–656; it reads SVIEYLKLYF…VPMEFCNLVE (117 aa). A Piwi domain is found at 841–1145; sequence LVLCAMTGKH…AASRGRVYYE (305 aa).

This sequence belongs to the argonaute family. Ago subfamily.

Functionally, involved in RNA-mediated post-transcriptional gene silencing (PTGS). Main component of the RNA-induced silencing complex (RISC) that binds to a short guide RNA such as a microRNA (miRNA) or small interfering RNA (siRNA). RISC uses the mature miRNA or siRNA as a guide for slicer-directed cleavage of homologous mRNAs to repress gene expression. This Arabidopsis thaliana (Mouse-ear cress) protein is Protein argonaute 3 (AGO3).